Here is a 408-residue protein sequence, read N- to C-terminus: Lysosome-associated membrane glycoprotein 3 (408 aa).

A signal peptide spans 1–20 (MPGQTSAVAVLLCLAVILHG). Residues 21-373 (YQIREKEFPE…IVDECLSDYT (353 aa)) are Lumenal-facing. 2 N-linked (GlcNAc...) asparagine glycosylation sites follow: asparagine 55 and asparagine 225. Cysteine 230 and cysteine 267 are oxidised to a cystine. Asparagine 284 carries N-linked (GlcNAc...) asparagine glycosylation. A disulfide bridge links cysteine 331 with cysteine 368. The helical transmembrane segment at 374-394 (VVLPVVGIIVVVLCVVGLGIY) threads the bilayer. Over 395-408 (KIRQRRQSSAYQRI) the chain is Cytoplasmic.

The protein belongs to the LAMP family. As to quaternary structure, monomer. Interacts with FURIN.

Its subcellular location is the cell surface. It localises to the lysosome membrane. It is found in the cytoplasmic vesicle membrane. The protein localises to the early endosome membrane. Functionally, lysosomal membrane glycoprotein which plays a role in the unfolded protein response (UPR) that contributes to protein degradation and cell survival during proteasomal dysfunction. Plays a role in the process of fusion of the lysosome with the autophagosome, thereby modulating the autophagic process. Promotes hepatocellular lipogenesis through activation of the PI3K/Akt pathway. May also play a role in dendritic cell function and in adaptive immunity. This is Lysosome-associated membrane glycoprotein 3 (Lamp3) from Rattus norvegicus (Rat).